We begin with the raw amino-acid sequence, 86 residues long: RNA-binding protein Hfq (86 aa).

A Sm domain is found at 9-68 (DPYLNTLRKEKVGVSIYLVNGIKLQGTIESFDQFVILLKNTVSQMVYKHAISTVVPVRPI).

The protein belongs to the Hfq family. As to quaternary structure, homohexamer.

Its function is as follows. RNA chaperone that binds small regulatory RNA (sRNAs) and mRNAs to facilitate mRNA translational regulation in response to envelope stress, environmental stress and changes in metabolite concentrations. Also binds with high specificity to tRNAs. The polypeptide is RNA-binding protein Hfq (Pseudomonas savastanoi pv. phaseolicola (strain 1448A / Race 6) (Pseudomonas syringae pv. phaseolicola (strain 1448A / Race 6))).